A 561-amino-acid polypeptide reads, in one-letter code: Lengsin (561 aa).

Disordered regions lie at residues 1–78 (MNDE…WHNA) and 91–112 (SLPS…TRDN). Over residues 26–37 (NKLKRTRRKVTK) the composition is skewed to basic residues. Polar residues predominate over residues 50 to 63 (MANSREMSRNQTAD). One can recognise a GS beta-grasp domain in the interval 135 to 229 (NHLQFVRFEA…VICDTFTVTG (95 aa)). The region spanning 236–561 (PRYIAKRQLR…EGNKFLEYFI (326 aa)) is the GS catalytic domain.

The protein belongs to the glutamine synthetase family. In terms of assembly, dodecamer. Interacts with BFSP2 and VIM. In terms of tissue distribution, expressed in lens.

Functionally, may act as a component of the cytoskeleton or as a chaperone for the reorganization of intermediate filament proteins during terminal differentiation in the lens. Does not seem to have enzymatic activity. In Rattus norvegicus (Rat), this protein is Lengsin (Lgsn).